The primary structure comprises 229 residues: MAKKKASIPFLSLTSIVFLPWCISFTCKKGMEYWVTNWWNTKQSEIFLNIIQEKSILKKFMELEELFFLDELLKEYSETRLQILRTGIHKETIQLIKTHNEDRIYTILHFSTNIIYFIILSGYSILGNQELIILNSWVQEFLYNLSDTIKAFSILLVTDLCIGFHSTHGWELLIGSVYKDFGFIQNDQIISGLVSTFPVILDTILKYWIFRYLNRVSPSLVVIYHSMND.

2 helical membrane-spanning segments follow: residues 114-134 (IIYF…LIIL) and 189-209 (IISG…KYWI).

The protein belongs to the CemA family.

It is found in the plastid. The protein localises to the chloroplast inner membrane. It catalyses the reaction K(+)(in) + H(+)(out) = K(+)(out) + H(+)(in). Contributes to K(+)/H(+) antiport activity by supporting proton efflux to control proton extrusion and homeostasis in chloroplasts in a light-dependent manner to modulate photosynthesis. Prevents excessive induction of non-photochemical quenching (NPQ) under continuous-light conditions. Indirectly promotes efficient inorganic carbon uptake into chloroplasts. The polypeptide is Potassium/proton antiporter CemA (Lotus japonicus (Lotus corniculatus var. japonicus)).